The primary structure comprises 41 residues: MMNLSYNSKSKATVIFVSNSTRNSSSSSRSSYSSRTTVFSL.

The segment at 19–41 is disordered; it reads NSTRNSSSSSRSSYSSRTTVFSL.

This is an uncharacterized protein from Dictyostelium discoideum (Social amoeba).